Here is an 836-residue protein sequence, read N- to C-terminus: Sucrose synthase 5 (836 aa).

The GT-B glycosyltransferase stretch occupies residues 270–748 (RIFNVVIFSV…GLQRINECYT (479 aa)). A disordered region spans residues 805 to 836 (PPPLPPKPLVKPSASKGSKRTQPRLSFRLFGA).

The protein belongs to the glycosyltransferase 1 family. Plant sucrose synthase subfamily. As to expression, detected in the whole plant but more precisely confined to the vasculature in cotyledons, leaves, petals, anthers and roots. Also detected in developing siliques, young immature rosette and cauline leaves.

It is found in the secreted. It localises to the cell wall. It carries out the reaction an NDP-alpha-D-glucose + D-fructose = a ribonucleoside 5'-diphosphate + sucrose + H(+). Sucrose-cleaving enzyme that provides UDP-glucose and fructose for various metabolic pathways. Functions in callose synthesis at the site of phloem sieve elements. This is Sucrose synthase 5 (SUS5) from Arabidopsis thaliana (Mouse-ear cress).